A 442-amino-acid polypeptide reads, in one-letter code: DMATS-type prenyltransferase mfmD (442 aa).

Belongs to the tryptophan dimethylallyltransferase family.

It functions in the pathway secondary metabolite biosynthesis; terpenoid biosynthesis. Its function is as follows. Prenyltransferase; part of the gene cluster that mediates the biosynthesis of the phthalide-terpenoid hybrid 11'-O-desmethylfendlerol. Within the pathway, mfmD is responsible for farnesylation of the cyclopolic acid intermediate via an O-prenylation reaction. The biosynthesis of 11'-O-desmethylfendlerol begins with the NR-PKS mfmB that forms 3,5-dimethylorsellinic acid (DMOA), which is then transformed into the phthalide 5,7-dihydroxy-4-(hydroxymethyl)-6-methylphthalide by the cytochrome P450 monooxygenase mfmA and the hydrolase mfmC. Subsequently, the methyltransferase mfmE catalyzes 7-O-methylation to yield 5-hydroxy-4-(hydroxymethyl)-7-methoxy-6-methylphthalide, which undergoes C-3 hydroxylation by the cytochrome P450 monooxygenase mfmF. The resultant cyclopolic acid (2,5-dihydroxy-4-(hydroxymethyl)-7-methoxy-6-methylphthalide) is then farnesylated by the DMATS-type prenyltransferase mfmD to afford 5-O-farnesylcyclopolic acid. Finally, the Pyr4-family terpene cyclase mfmH cyclizes the farnesyl moiety of 5-O-farnesylcyclopolic acid into a drimane-like structure, thus completing the biosynthesis of 11'-O-desmethylfendlerol. The sequence is that of DMATS-type prenyltransferase mfmD from Annulohypoxylon moriforme (Filamentous fungus).